Reading from the N-terminus, the 321-residue chain is Cytochrome c biogenesis protein CcsA (321 aa).

The next 8 membrane-spanning stretches (helical) occupy residues valine 17–leucine 37, methionine 46–leucine 63, leucine 71–phenylalanine 91, leucine 98–leucine 118, methionine 143–isoleucine 163, isoleucine 225–asparagine 245, threonine 259–histidine 273, and alanine 286–leucine 306.

This sequence belongs to the CcmF/CycK/Ccl1/NrfE/CcsA family. As to quaternary structure, may interact with Ccs1.

Its subcellular location is the plastid. It localises to the chloroplast thylakoid membrane. Functionally, required during biogenesis of c-type cytochromes (cytochrome c6 and cytochrome f) at the step of heme attachment. The protein is Cytochrome c biogenesis protein CcsA of Morus indica (Mulberry).